The following is a 56-amino-acid chain: uncharacterized protein (56 aa).

This is an uncharacterized protein from Acheta domesticus (House cricket).